Consider the following 138-residue polypeptide: MAALPDKERLLRNFQRCANWEEKYLYIIELGQRLAELNEQDRHSENSIQGCQSQVWIVMRQNADGVIELQGDSDAAIVKGLIAIVFILYHQMTPQDIVNFDVRPWFEKMALTQHLTPSRSQGLEAMIRAIRARAATLS.

Cys51 acts as the Cysteine persulfide intermediate in catalysis.

It belongs to the SufE family. In terms of assembly, homodimer. Interacts with SufS.

Its subcellular location is the cytoplasm. The protein operates within cofactor biosynthesis; iron-sulfur cluster biosynthesis. Its function is as follows. Participates in cysteine desulfuration mediated by SufS. Cysteine desulfuration mobilizes sulfur from L-cysteine to yield L-alanine and constitutes an essential step in sulfur metabolism for biosynthesis of a variety of sulfur-containing biomolecules. Functions as a sulfur acceptor for SufS, by mediating the direct transfer of the sulfur atom from the S-sulfanylcysteine of SufS, an intermediate product of cysteine desulfuration process. This is Cysteine desulfuration protein SufE from Citrobacter koseri (strain ATCC BAA-895 / CDC 4225-83 / SGSC4696).